A 58-amino-acid chain; its full sequence is ATP synthase F(0) complex subunit k, mitochondrial (58 aa).

N6-acetyllysine; partial is present on residues Lys16 and Lys17. The helical transmembrane segment at 23–45 (TLTGRMNCVLATYGSIALIVLYF) threads the bilayer.

In terms of assembly, component of the ATP synthase complex composed at least of ATP5F1A/subunit alpha, ATP5F1B/subunit beta, ATP5MC1/subunit c (homooctomer), MT-ATP6/subunit a, MT-ATP8/subunit 8, ATP5ME/subunit e, ATP5MF/subunit f, ATP5MG/subunit g, ATP5MK/subunit k, ATP5MJ/subunit j, ATP5F1C/subunit gamma, ATP5F1D/subunit delta, ATP5F1E/subunit epsilon, ATP5PF/subunit F6, ATP5PB/subunit b, ATP5PD/subunit d, ATP5PO/subunit OSCP. ATP synthase complex consists of a soluble F(1) head domain (subunits alpha(3) and beta(3)) - the catalytic core - and a membrane F(0) domain - the membrane proton channel (subunits c, a, 8, e, f, g, k and j). These two domains are linked by a central stalk (subunits gamma, delta, and epsilon) rotating inside the F1 region and a stationary peripheral stalk (subunits F6, b, d, and OSCP). The ATP synthase complex/complex V exists as a monomeric and a dimeric supercomplex that helps shape mitochondrial cristae to optimize proton flow.

Its subcellular location is the mitochondrion membrane. Subunit k, of the mitochondrial membrane ATP synthase complex (F(1)F(0) ATP synthase or Complex V) that produces ATP from ADP in the presence of a proton gradient across the membrane which is generated by electron transport complexes of the respiratory chain. ATP synthase complex consist of a soluble F(1) head domain - the catalytic core - and a membrane F(1) domain - the membrane proton channel. These two domains are linked by a central stalk rotating inside the F(1) region and a stationary peripheral stalk. During catalysis, ATP synthesis in the catalytic domain of F(1) is coupled via a rotary mechanism of the central stalk subunits to proton translocation. In vivo, can only synthesize ATP although its ATP hydrolase activity can be activated artificially in vitro. Part of the complex F(0) domain. Required for dimerization of the ATP synthase complex and as such regulates ATP synthesis in the mitochondria. The chain is ATP synthase F(0) complex subunit k, mitochondrial from Bos taurus (Bovine).